Consider the following 446-residue polypeptide: MREIVHLQTGQCGNQIGAAFWQTISGEHGLDGSGVYNGTSDLQLERMNVYFNEASGNKYVPRAVLVDLEPGTMDAVRAGPFGQLFRPDNFVFGQSGAGNNWAKGHYTEGAELVDQVLDVVRREAEGCDCLQGFQITHSLGGGTGAGMGTLLISKIREEFPDRMMATFSVVPSPKVSDTVVEPYNATLSVHQLVENSDETFCIDNEALYDICMRTLKLSNPSYGDLNHLVSAVMSGVTTCLRFPGQLNSDLRKLAVNMVPFPRLHFFMVGFAPLTSRGAHSFRAVTVPELTQQMFDPKNMMAASDFRNGRYLTCSAIFRGKVSMKEVEDQMRNVQQKNVSYFVEWIPNNVQTALCSIPPRGLKMSSTFVGNSTSIQELFKRVGDQFTAMFRRKAFLHWYTGEGMDEMEFTEAESNMNDLVSEYQQYQEASISEGEEEYPEEVSNEEE.

GTP is bound by residues Gln11, Glu69, Ser138, Gly142, Thr143, Gly144, Asn204, and Asn226. Residue Glu69 coordinates Mg(2+). Residues 425–446 (YQEASISEGEEEYPEEVSNEEE) form a disordered region. A compositionally biased stretch (acidic residues) spans 432–446 (EGEEEYPEEVSNEEE).

It belongs to the tubulin family. As to quaternary structure, dimer of alpha and beta chains. A typical microtubule is a hollow water-filled tube with an outer diameter of 25 nm and an inner diameter of 15 nM. Alpha-beta heterodimers associate head-to-tail to form protofilaments running lengthwise along the microtubule wall with the beta-tubulin subunit facing the microtubule plus end conferring a structural polarity. Microtubules usually have 13 protofilaments but different protofilament numbers can be found in some organisms and specialized cells. Mg(2+) serves as cofactor.

The protein resides in the cytoplasm. It localises to the cytoskeleton. Functionally, tubulin is the major constituent of microtubules, a cylinder consisting of laterally associated linear protofilaments composed of alpha- and beta-tubulin heterodimers. Microtubules grow by the addition of GTP-tubulin dimers to the microtubule end, where a stabilizing cap forms. Below the cap, tubulin dimers are in GDP-bound state, owing to GTPase activity of alpha-tubulin. The protein is Tubulin beta chain (TUB2) of Blumeria hordei (Barley powdery mildew).